The chain runs to 557 residues: Jerky protein (557 aa).

An HTH psq-type domain is found at 11–62 (KGEKRKRVVLTLKEKIDICTRLERGESRKALMQEYNVGMSTLYDIKAHKAQL). 2 DNA-binding regions (H-T-H motif) span residues 38–58 (RKALMQEYNVGMSTLYDIKAH) and 110–142 (PMLIEKAKDFYKQMRLTEPCVFSGGWLWRFKAR). Positions 77 to 149 (QRRTLHTPKL…KARHGIKKLD (73 aa)) constitute an HTH CENPB-type domain. The 170-residue stretch at 213–382 (KDRLTVLMCA…VPSQVFQRAW (170 aa)) folds into the DDE-1 domain.

This sequence belongs to the tigger transposable element derived protein family. Brain; highest in the temporal and brainstem regions.

Its subcellular location is the nucleus. In terms of biological role, may bind DNA. This Mus musculus (Mouse) protein is Jerky protein.